The primary structure comprises 191 residues: Protein GrpE (191 aa).

Basic and acidic residues-rich tracts occupy residues M1 to S19 and Q29 to C42. Residues M1–C42 are disordered.

The protein belongs to the GrpE family. Homodimer.

The protein localises to the cytoplasm. In terms of biological role, participates actively in the response to hyperosmotic and heat shock by preventing the aggregation of stress-denatured proteins, in association with DnaK and GrpE. It is the nucleotide exchange factor for DnaK and may function as a thermosensor. Unfolded proteins bind initially to DnaJ; upon interaction with the DnaJ-bound protein, DnaK hydrolyzes its bound ATP, resulting in the formation of a stable complex. GrpE releases ADP from DnaK; ATP binding to DnaK triggers the release of the substrate protein, thus completing the reaction cycle. Several rounds of ATP-dependent interactions between DnaJ, DnaK and GrpE are required for fully efficient folding. This Helicobacter pylori (strain HPAG1) protein is Protein GrpE.